A 1075-amino-acid chain; its full sequence is Ataxin-2-like protein (1075 aa).

N-acetylmethionine is present on Met1. Over residues 1-12 the composition is skewed to low complexity; sequence MLKPQPLQQPSQ. A disordered region spans residues 1-115; that stretch reads MLKPQPLQQP…KGPPQSPVFE (115 aa). Residues 98-121 are interaction with MPL; sequence SARGQSTGKGPPQSPVFEGVYNNS. Phosphoserine occurs at positions 103 and 111. Position 118 is a phosphotyrosine (Tyr118). The Sm domain maps to 122–199; the sequence is RMLHFLTAVV…VMLVHFRNVD (78 aa). Lys207 carries the post-translational modification N6-acetyllysine. Ser238 carries the phosphoserine modification. Position 264 is a phosphotyrosine (Tyr264). Ser306 carries the post-translational modification Phosphoserine. Tyr309 bears the Phosphotyrosine mark. Residues 316 to 328 show a composition bias toward basic and acidic residues; sequence ENDDGRTEEEKHS. Disordered stretches follow at residues 316 to 521, 551 to 697, 733 to 770, 820 to 849, 865 to 940, and 1022 to 1045; these read ENDD…LEPQ, QFKL…SIPV, VSNS…MMQA, SNPR…EQPT, ATQL…SSFP, and PYIG…ADDR. Over residues 330–342 the composition is skewed to polar residues; sequence VQRQGSGRESPSL. A phosphoserine mark is found at Ser335 and Ser339. Lys348 participates in a covalent cross-link: Glycyl lysine isopeptide (Lys-Gly) (interchain with G-Cter in SUMO2). Position 349 is a phosphotyrosine (Tyr349). At Arg361 the chain carries Asymmetric dimethylarginine. Low complexity predominate over residues 363-380; it reads GVRCSSSRGGRPGLSSLP. 2 positions are modified to phosphoserine: Ser391 and Ser409. Polar residues predominate over residues 421-433; the sequence is TLSSPSNRPSGET. At Ser449 the chain carries Phosphoserine. 2 stretches are compositionally biased toward low complexity: residues 450 to 462 and 471 to 485; these read PKSA…SASC and VPTS…SSVS. Phosphoserine is present on residues Ser493 and Ser496. Residues 505–516 are compositionally biased toward basic and acidic residues; it reads DVKELSTKEPGR. Phosphoserine is present on residues Ser557, Ser558, Ser559, and Ser563. Residues 571 to 584 show a composition bias toward basic and acidic residues; sequence ILKEEPKGKEKEVD. Ser594 is subject to Phosphoserine. A Phosphothreonine modification is found at Thr632. Ser634, Ser674, Ser680, and Ser684 each carry phosphoserine. Low complexity-rich tracts occupy residues 678–694 and 761–770; these read STST…STPS and PASAPPMMQA. The segment covering 874–898 has biased composition (polar residues); the sequence is QPATTPTGSQPQSQHAAPSPVQHQA. 2 stretches are compositionally biased toward low complexity: residues 931–940 and 1025–1037; these read SAQSPQSSFP and GHPQ…QAPG.

The protein belongs to the ataxin-2 family. As to quaternary structure, interacts with MPL/TPOR and EPOR and dissociates after ligand stimulation. Interacts with DDX6, G3BP1, and ATXN2. Interacts with PRMT1. Interacts with CIC and ATXN1. In terms of processing, thrombopoietin triggers the phosphorylation on tyrosine residues in a way that is dependent on MPL C-terminal domain. Asymmetrically dimethylated. Probably methylated by PRMT1. In terms of tissue distribution, expressed at high levels in thymus, lymph node, spleen, fetal kidney and adult testis. Constitutively associated with MPL and EPOR in hematopoietic cells.

It localises to the membrane. It is found in the cytoplasm. The protein resides in the nucleus speckle. The protein localises to the cytoplasmic granule. In terms of biological role, involved in the regulation of stress granule and P-body formation. The polypeptide is Ataxin-2-like protein (ATXN2L) (Homo sapiens (Human)).